Consider the following 38-residue polypeptide: Photosystem II reaction center protein M (38 aa).

Residues 7 to 27 form a helical membrane-spanning segment; it reads GFVASILFVLVPSVFLIILYI.

It belongs to the PsbM family. PSII is composed of 1 copy each of membrane proteins PsbA, PsbB, PsbC, PsbD, PsbE, PsbF, PsbH, PsbI, PsbJ, PsbK, PsbL, PsbM, PsbT, PsbX, PsbY, PsbZ, Psb30/Ycf12, peripheral proteins PsbO, CyanoQ (PsbQ), PsbU, PsbV and a large number of cofactors. It forms dimeric complexes.

It is found in the cellular thylakoid membrane. Functionally, one of the components of the core complex of photosystem II (PSII). PSII is a light-driven water:plastoquinone oxidoreductase that uses light energy to abstract electrons from H(2)O, generating O(2) and a proton gradient subsequently used for ATP formation. It consists of a core antenna complex that captures photons, and an electron transfer chain that converts photonic excitation into a charge separation. This subunit is found at the monomer-monomer interface. This Nostoc sp. (strain PCC 7120 / SAG 25.82 / UTEX 2576) protein is Photosystem II reaction center protein M.